We begin with the raw amino-acid sequence, 209 residues long: Small ribosomal subunit protein uS4 (209 aa).

The segment covering 1 to 13 has biased composition (basic residues); the sequence is MSTKSRTRSKTRL. Disordered regions lie at residues 1-20 and 28-49; these read MSTKSRTRSKTRLSRALGIP and YLEKRPYAPGEHGRSKRKQDSD. One can recognise an S4 RNA-binding domain in the interval 95-176; the sequence is QRLDALVVRS…PKLPSYLEVE (82 aa).

This sequence belongs to the universal ribosomal protein uS4 family. Part of the 30S ribosomal subunit. Contacts protein S5. The interaction surface between S4 and S5 is involved in control of translational fidelity.

One of the primary rRNA binding proteins, it binds directly to 16S rRNA where it nucleates assembly of the body of the 30S subunit. In terms of biological role, with S5 and S12 plays an important role in translational accuracy. This chain is Small ribosomal subunit protein uS4, found in Clavibacter michiganensis subsp. michiganensis (strain NCPPB 382).